The primary structure comprises 91 residues: Apolipoprotein C-III (91 aa).

The first 20 residues, 1–20 (MQPRVLLAVTLLALLVSARA), serve as a signal peptide directing secretion. Residue Met63 is modified to Methionine sulfoxide. The interval 68-91 (DSMKGYWTSLIGRLSGFLDSTPSS) is lipid-binding.

This sequence belongs to the apolipoprotein C3 family.

Its subcellular location is the secreted. In terms of biological role, component of triglyceride-rich very low density lipoproteins (VLDL) and high density lipoproteins (HDL) in plasma. Plays a multifaceted role in triglyceride homeostasis. Intracellularly, promotes hepatic very low density lipoprotein 1 (VLDL1) assembly and secretion; extracellularly, attenuates hydrolysis and clearance of triglyceride-rich lipoproteins (TRLs). Impairs the lipolysis of TRLs by inhibiting lipoprotein lipase and the hepatic uptake of TRLs by remnant receptors. Formed of several curved helices connected via semiflexible hinges, so that it can wrap tightly around the curved micelle surface and easily adapt to the different diameters of its natural binding partners. This Cavia porcellus (Guinea pig) protein is Apolipoprotein C-III (APOC3).